The sequence spans 42 residues: Photosystem I reaction center subunit IX (42 aa).

A helical membrane pass occupies residues Tyr7–Ile27.

The protein belongs to the PsaJ family.

The protein localises to the plastid. It localises to the chloroplast thylakoid membrane. May help in the organization of the PsaE and PsaF subunits. In Nephroselmis olivacea (Green alga), this protein is Photosystem I reaction center subunit IX.